Reading from the N-terminus, the 354-residue chain is Peptide chain release factor 1 (354 aa).

Gln230 carries the post-translational modification N5-methylglutamine. The segment at 282–301 (KQASDAIKKQMIGSGDRSER) is disordered.

It belongs to the prokaryotic/mitochondrial release factor family. In terms of processing, methylated by PrmC. Methylation increases the termination efficiency of RF1.

The protein resides in the cytoplasm. Peptide chain release factor 1 directs the termination of translation in response to the peptide chain termination codons UAG and UAA. This Leptospira borgpetersenii serovar Hardjo-bovis (strain L550) protein is Peptide chain release factor 1.